A 368-amino-acid chain; its full sequence is Putative flavoprotein monooxygenase (368 aa).

Residues Ala14, Glu34, Ser41, 52-53 (IT), Val110, Ala307, and Ile319 contribute to the FAD site.

It depends on FAD as a cofactor.

In terms of biological role, FAD-binding protein that may have monooxygenase activity using NADPH and/or NADH as an electron donor. This is Putative flavoprotein monooxygenase from Staphylococcus aureus (strain Mu50 / ATCC 700699).